A 511-amino-acid polypeptide reads, in one-letter code: MLADILIPLIKKNWMAFVYFTPVLFVVLYLLKEWRAAYGFNNLGQTVAAPFGYERKTLPYNKENCARTKFLDGKSLSIKNRDQCGDLYLQRSGTYKEIVLTTPKQLMEYYKSNSKNHSKLDSFGAGAFLVALLGECLGFQNGSEWLSMRKVFDSFFTHKAAVENFPVMIDYISEWIKDLDTEQISDIDPLQLVSDLPFTCIAKYLYGSELCSKQFLQALKDLIPMHTELMHYSFLTVAGRFKIFQYFPSKKMKQVSQFQRQFIDLSLKQVELSRQSGQETVVEKLYRHVESGKFTFNNWIQTIDEILFANIEVTSTVMAWALVEMGSNIEEQNRLRCEILKVKEQSSKDDFNKETDPMQRYMKLTDTYLQYCVWETLRMHPLLWFSFPEISSETLFIDGIRISPNTPIVVDQYQINYNSPIWNPSDKPKDFGKKFAPSRFENITLRDALYSQVTFGAGSRKCLGRNFAELLIKSELAYILSKYKVTLTEKVEFSKDTFVVQPKTKIQLTAL.

Residues W14–W34 form a helical membrane-spanning segment. 3 N-linked (GlcNAc...) asparagine glycosylation sites follow: N116, N141, and N442. C462 serves as a coordination point for heme.

Belongs to the cytochrome P450 family. Heme serves as cofactor.

The protein localises to the membrane. It participates in siderophore biosynthesis. Cytochrome P450 monooxygenase; part of the PUL gene cluster that mediates the formation of pulcherrimin, a red iron-containing pigment composed of two cyclized and modified leucine molecules that acts as a siderophore, a chelator that binds iron outside the cell for subsequent uptake. Two leucine molecules are cyclized via a cyclodipeptide synthase, and the resulting diketopiperazine is oxidized by a cytochrome P450 monooxygenase to generate pulcherriminic acid (PA), which can then spontaneously bind iron to form pulcherrimin. The probable cyclodipeptide synthase PUL1 and the cytochrome P450 monooxygenase PUL2 encode the enzymes responsible for the two-step pulcherrimin biosynthesis pathway. In Kluyveromyces lactis (strain ATCC 8585 / CBS 2359 / DSM 70799 / NBRC 1267 / NRRL Y-1140 / WM37) (Yeast), this protein is Cytochrome P450 monooxygenase PUL2.